The primary structure comprises 308 residues: D-alanine--D-alanine ligase (308 aa).

An ATP-grasp domain is found at 103–302 (KFVFRAAGLP…YGELVSWMVE (200 aa)). 130-184 (MDPPYVIKPVSEGSSVGVFIVRAGDNRPPAELTSAEWNLGDEVMAERYIAGRELT) contacts ATP. Residues aspartate 252, glutamate 269, and asparagine 271 each contribute to the Mg(2+) site.

This sequence belongs to the D-alanine--D-alanine ligase family. The cofactor is Mg(2+). Mn(2+) is required as a cofactor.

It localises to the cytoplasm. The enzyme catalyses 2 D-alanine + ATP = D-alanyl-D-alanine + ADP + phosphate + H(+). It participates in cell wall biogenesis; peptidoglycan biosynthesis. Functionally, cell wall formation. The sequence is that of D-alanine--D-alanine ligase from Parvibaculum lavamentivorans (strain DS-1 / DSM 13023 / NCIMB 13966).